The primary structure comprises 147 residues: MPLSPYLSFAGNCSDAIAYYQRTLGAELLYKISFGEMPKSAQDSAENCPSGMQFPDTAIAHANVRIAGSDIMMSDAMPSGKASYSGFTLVLDSQQVEEGKRWFDNLAANGKIEMAWQETFWAHGFGKVTDKFGVPWMINVVKQQPTQ.

The polypeptide is Protein YjdN (yjdN) (Escherichia coli (strain K12)).